Reading from the N-terminus, the 24-residue chain is Chlorate reductase subunit beta (24 aa).

Heterotrimer of alpha, beta and gamma subunits. [3Fe-4S] cluster is required as a cofactor. Requires [4Fe-4S] cluster as cofactor.

The protein localises to the cytoplasm. Electron transfer subunit of the chlorate reductase. This is Chlorate reductase subunit beta from Stutzerimonas chloritidismutans (Pseudomonas chloritidismutans).